We begin with the raw amino-acid sequence, 727 residues long: Prolyl endopeptidase-like (727 aa).

Residues Ser559, Asp645, and His690 each act as charge relay system in the active site.

The protein belongs to the peptidase S9A family. Homodimer. Interacts with the AP-1 complex.

It localises to the cytoplasm. It is found in the cytosol. The protein localises to the golgi apparatus. Its subcellular location is the trans-Golgi network. The protein resides in the cytoskeleton. It localises to the nucleus. Functionally, serine peptidase whose precise substrate specificity remains unclear. Does not cleave peptides after a arginine or lysine residue. Regulates trans-Golgi network morphology and sorting by regulating the membrane binding of the AP-1 complex. May play a role in the regulation of synaptic vesicle exocytosis. The sequence is that of Prolyl endopeptidase-like (PREPL) from Pongo abelii (Sumatran orangutan).